Here is a 252-residue protein sequence, read N- to C-terminus: Phosphate import ATP-binding protein PstB (252 aa).

Residues 6 to 247 (ISAENLNLFY…PKDQRTEDYI (242 aa)) enclose the ABC transporter domain. Position 38 to 45 (38 to 45 (GPSGCGKS)) interacts with ATP.

This sequence belongs to the ABC transporter superfamily. Phosphate importer (TC 3.A.1.7) family. The complex is composed of two ATP-binding proteins (PstB), two transmembrane proteins (PstC and PstA) and a solute-binding protein (PstS).

Its subcellular location is the cell membrane. It carries out the reaction phosphate(out) + ATP + H2O = ADP + 2 phosphate(in) + H(+). Part of the ABC transporter complex PstSACB involved in phosphate import. Responsible for energy coupling to the transport system. The protein is Phosphate import ATP-binding protein PstB of Heliobacterium mobile (Heliobacillus mobilis).